The sequence spans 84 residues: Putative defensin-like protein 165 (84 aa).

An N-terminal signal peptide occupies residues methionine 1–alanine 27. 4 disulfide bridges follow: cysteine 31–cysteine 78, cysteine 41–cysteine 60, cysteine 46–cysteine 72, and cysteine 50–cysteine 74.

Belongs to the DEFL family.

Its subcellular location is the secreted. This chain is Putative defensin-like protein 165 (LCR12), found in Arabidopsis thaliana (Mouse-ear cress).